We begin with the raw amino-acid sequence, 343 residues long: Methionine synthase (343 aa).

Zn(2+)-binding residues include H211, C213, E236, and C315.

Belongs to the archaeal MetE family. Requires Zn(2+) as cofactor.

Its pathway is amino-acid biosynthesis; L-methionine biosynthesis via de novo pathway. Its function is as follows. Catalyzes the transfer of a methyl group to L-homocysteine resulting in methionine formation. The physiological methyl donor is unknown. The polypeptide is Methionine synthase (Thermoplasma acidophilum (strain ATCC 25905 / DSM 1728 / JCM 9062 / NBRC 15155 / AMRC-C165)).